Here is a 193-residue protein sequence, read N- to C-terminus: dCTP deaminase (193 aa).

DCTP-binding positions include 110-115, aspartate 128, 136-138, tyrosine 171, lysine 178, and glutamine 182; these read RSSLAR and VLE. Glutamate 138 functions as the Proton donor/acceptor in the catalytic mechanism. Residues 169–193 form a disordered region; it reads RPYNSRQDAKYRDQQGAVASRIDKD.

It belongs to the dCTP deaminase family. Homotrimer.

The catalysed reaction is dCTP + H2O + H(+) = dUTP + NH4(+). The protein operates within pyrimidine metabolism; dUMP biosynthesis; dUMP from dCTP (dUTP route): step 1/2. Functionally, catalyzes the deamination of dCTP to dUTP. In Serratia proteamaculans (strain 568), this protein is dCTP deaminase.